Reading from the N-terminus, the 61-residue chain is Small ribosomal subunit protein uS14 (61 aa).

Positions 24, 27, 40, and 43 each coordinate Zn(2+).

This sequence belongs to the universal ribosomal protein uS14 family. Zinc-binding uS14 subfamily. In terms of assembly, part of the 30S ribosomal subunit. Contacts proteins S3 and S10. Zn(2+) is required as a cofactor.

Its function is as follows. Binds 16S rRNA, required for the assembly of 30S particles and may also be responsible for determining the conformation of the 16S rRNA at the A site. This Natranaerobius thermophilus (strain ATCC BAA-1301 / DSM 18059 / JW/NM-WN-LF) protein is Small ribosomal subunit protein uS14.